Here is a 190-residue protein sequence, read N- to C-terminus: Bifunctional D-Ala-D-Ala dipeptidase and D-Ala-D-Ala carboxypeptidase VanXYC (190 aa).

Residue Glu66 coordinates Mg(2+). A dipeptide-binding residues include Gln67, Ala88, Ser93, His95, and Asp102. Residues His95 and Asp102 each contribute to the Cu(2+) site. His95 and Asp102 together coordinate Zn(2+). The active-site catalytic acid/base residue is the Glu153. Trp155 and His156 together coordinate a dipeptide. His156 is a Cu(2+) binding site. Residue His156 coordinates Zn(2+).

It belongs to the peptidase M15D family. As to quaternary structure, homodimer.

It is found in the cytoplasm. The enzyme catalyses D-alanyl-D-alanine + H2O = 2 D-alanine. It catalyses the reaction UDP-N-acetyl-alpha-D-muramoyl-L-alanyl-gamma-D-glutamyl-L-lysyl-D-alanyl-D-alanine + H2O = UDP-N-acetyl-alpha-D-muramoyl-L-alanyl-gamma-D-glutamyl-L-lysyl-D-alanine + D-alanine. Functionally, bifunctional enzyme, exhibiting dipeptidase and carboxypeptidase activities. Catalyzes hydrolysis of the D-alanyl-D-alanine dipeptide. Cleaves the C-terminal D-alanine residue of UDP-muramyl-pentapeptide[Ala] (UDP-MurNAc-L-Ala-D-Glu-L-Lys-D-Ala-D-Ala). Shows no activity against the pentapeptide with a C-terminal D-serine residue. Together with VanC/VanC1 and VanT, required for vancomycin resistance in E.gallinarum strain BM4174. This is Bifunctional D-Ala-D-Ala dipeptidase and D-Ala-D-Ala carboxypeptidase VanXYC from Enterococcus gallinarum.